The primary structure comprises 216 residues: Small ribosomal subunit protein uS3 (216 aa).

Residues 20 to 91 (LKEFFEKALV…SVEIVVEKVH (72 aa)) enclose the KH type-2 domain.

This sequence belongs to the universal ribosomal protein uS3 family.

The sequence is that of Small ribosomal subunit protein uS3 (RPS3) from Encephalitozoon cuniculi (strain GB-M1) (Microsporidian parasite).